Here is a 235-residue protein sequence, read N- to C-terminus: Small ribosomal subunit protein uS2c (235 aa).

It belongs to the universal ribosomal protein uS2 family.

The protein localises to the plastid. It localises to the chloroplast. The chain is Small ribosomal subunit protein uS2c (rps2) from Guillardia theta (Cryptophyte).